The following is a 423-amino-acid chain: Putative competence-damage inducible protein (423 aa).

This sequence belongs to the CinA family.

The sequence is that of Putative competence-damage inducible protein from Streptococcus pyogenes serotype M49 (strain NZ131).